We begin with the raw amino-acid sequence, 379 residues long: MSGNDYYEILEVSRNASAEEIKKSYRKMVFKYHPDKNPGDKKAEEKFKKISEAYEVLSNPEKRAAYDRYGHSTFTSGGASGFDFTSGFSTDFSDIFQDFFGGGFGKSQRASSREHLRGSDLRYDVEVSLEDAFKGIKVPISYVTNVKCSSCSGIGSEGAVNSVKCGNCNGAGSVRTRKGFLTIEEVCNVCNGEGEVIKNKCRRCGGSGRVRNEVSLLVTVPKGIETGNKVRVNGKGEAGFRGAQEGDLYVYIRVKEHKFFTRRSSDLHCSVPIKMTIAALGGEIEMPSIDGSWTKLKIPEGTQSGDQIRMRGKGMPEVNSKDRRGDMYVHVTVETPVKLTKQQVDLLKKFEEESSANCSPKYQGFFQKIKDIWRDISSG.

Residues 5-70 (DYYEILEVSR…EKRAAYDRYG (66 aa)) enclose the J domain. The segment at 135 to 213 (GIKVPISYVT…CGGSGRVRNE (79 aa)) adopts a CR-type zinc-finger fold. Zn(2+) is bound by residues Cys148, Cys151, Cys165, Cys168, Cys187, Cys190, Cys201, and Cys204. 4 CXXCXGXG motif repeats span residues 148–155 (CSSCSGIG), 165–172 (CGNCNGAG), 187–194 (CNVCNGEG), and 201–208 (CRRCGGSG).

It belongs to the DnaJ family. As to quaternary structure, homodimer. Requires Zn(2+) as cofactor.

It localises to the cytoplasm. Functionally, participates actively in the response to hyperosmotic and heat shock by preventing the aggregation of stress-denatured proteins and by disaggregating proteins, also in an autonomous, DnaK-independent fashion. Unfolded proteins bind initially to DnaJ; upon interaction with the DnaJ-bound protein, DnaK hydrolyzes its bound ATP, resulting in the formation of a stable complex. GrpE releases ADP from DnaK; ATP binding to DnaK triggers the release of the substrate protein, thus completing the reaction cycle. Several rounds of ATP-dependent interactions between DnaJ, DnaK and GrpE are required for fully efficient folding. Also involved, together with DnaK and GrpE, in the DNA replication of plasmids through activation of initiation proteins. This chain is Chaperone protein DnaJ, found in Anaplasma marginale (strain Florida).